Here is a 1711-residue protein sequence, read N- to C-terminus: Reverse gyrase (1711 aa).

Residues 1 to 39 form an RG N-terminal-type zinc finger; it reads MKAVYREMCPNCWGRISDERLVMRNPCEECLDEPVHADS. The Zn(2+) site is built by Cys-9, Cys-12, Cys-27, and Cys-30. ATP-binding positions include Gln-89 and 106–113; that span reads APTGMGKS. One can recognise a Helicase ATP-binding domain in the interval 93 to 256; sequence VKRLLKGRSF…RLKKQMSRYL (164 aa). A DEAD box motif is present at residues 213 to 216; the sequence is DDVD. The topoisomerase I stretch occupies residues 638–1711; the sequence is DLVRSALMIV…YSEIQRYVSG (1074 aa). The 164-residue stretch at 642 to 805 folds into the Toprim domain; sequence SALMIVESPN…NIKRIEFHEV (164 aa). Glu-648 lines the Mg(2+) pocket. The segment at 722–751 adopts an RG C-terminal-type zinc-finger fold; that stretch reads LKRCRDCGHQFVDWEKKGVCPRCGSTNVRD. Positions 725, 728, 741, and 744 each coordinate Zn(2+). Residue Asp-774 participates in Mg(2+) binding. One can recognise a Topo IA-type catalytic domain in the interval 821 to 1709; it reads NENRVNAQIV…ELYSEIQRYV (889 aa). Residues 1160–1287 form the DOD-type homing endonuclease domain; it reads VFGLVLGDGT…LSVYLYQIGI (128 aa). Tyr-1452 serves as the catalytic O-(5'-phospho-DNA)-tyrosine intermediate.

This sequence in the N-terminal section; belongs to the DEAD box helicase family. DDVD subfamily. In the C-terminal section; belongs to the type IA topoisomerase family. Monomer. Requires Zn(2+) as cofactor. The cofactor is Mg(2+). In terms of processing, this protein undergoes a protein self splicing that involves a post-translational excision of the intervening region (intein) followed by peptide ligation.

Its subcellular location is the cytoplasm. It catalyses the reaction ATP + H2O = ADP + phosphate + H(+). Functionally, modifies the topological state of DNA by introducing positive supercoils in an ATP-dependent process, increasing the linking number in steps of +1. Binds to single-stranded DNA, transiently cleaves and then rejoins the ends, introducing a positive supercoil in the process. The scissile phosphodiester is attacked by the catalytic tyrosine of the enzyme, resulting in the formation of a DNA-(5'-phosphotyrosyl)-enzyme intermediate. Probably involved in rewinding DNA strands in regions of the chromosome that have opened up to allow replication, transcription, DNA repair and/or for DNA protection. The sequence is that of Reverse gyrase from Thermococcus kodakarensis (strain ATCC BAA-918 / JCM 12380 / KOD1) (Pyrococcus kodakaraensis (strain KOD1)).